Consider the following 261-residue polypeptide: uncharacterized protein (261 aa).

5 helical membrane passes run 38–58, 134–154, 163–183, 195–215, and 219–239; these read FIYL…ITLL, YTLM…LALI, ILIN…TYVL, YMGL…LFFL, and HKSV…CLKV.

The protein resides in the membrane. This is an uncharacterized protein from Dictyostelium discoideum (Social amoeba).